The primary structure comprises 204 residues: Cold and drought-regulated protein CORA (204 aa).

18 consecutive repeat copies span residues 54–59 (YNHGGG), 65–70 (YNHGGG), 71–76 (YNHGGG), 78–83 (YHNGGG), 85–90 (YNHGGG), 98–100 (HGG), 101–103 (HGG), 112–114 (HGG), 115–117 (HGG), 126–128 (HGG), 129–131 (HGG), 164–169 (YNHGGG), 171–176 (YNHGGG), 178–180 (HGG), 181–183 (HGG), 184–186 (HGG), 187–189 (HGG), and 190–192 (HGG). Residues 54 to 176 (YNHGGGYNGG…GGGGYNHGGG (123 aa)) form a 7 X 6 AA repeats of Y-N-H-G-G-G region. The segment at 98–192 (HGGHGGGGYN…GHGGHGGHGG (95 aa)) is 11 X 3 AA repeats of H-G-G. The span at 169-194 (GGYNHGGGGHGGHGGHGGHGGHGGHG) shows a compositional bias: gly residues. The segment at 169–204 (GGYNHGGGGHGGHGGHGGHGGHGGHGAVQTEDNTQN) is disordered.

Belongs to the GRP family.

Functionally, may be involved in resistance of the plant to environmental stress. The polypeptide is Cold and drought-regulated protein CORA (CORA) (Medicago sativa (Alfalfa)).